The chain runs to 484 residues: Glutamate--tRNA ligase (484 aa).

Positions 11–21 (PSPTGYLHIGN) match the 'HIGH' region motif. The short motif at 252–256 (KLSKR) is the 'KMSKS' region element. Residue K255 participates in ATP binding.

Belongs to the class-I aminoacyl-tRNA synthetase family. Glutamate--tRNA ligase type 1 subfamily. As to quaternary structure, monomer.

It localises to the cytoplasm. It catalyses the reaction tRNA(Glu) + L-glutamate + ATP = L-glutamyl-tRNA(Glu) + AMP + diphosphate. Catalyzes the attachment of glutamate to tRNA(Glu) in a two-step reaction: glutamate is first activated by ATP to form Glu-AMP and then transferred to the acceptor end of tRNA(Glu). The chain is Glutamate--tRNA ligase from Staphylococcus haemolyticus (strain JCSC1435).